A 283-amino-acid polypeptide reads, in one-letter code: NFU1 iron-sulfur cluster scaffold homolog, mitochondrial (283 aa).

The N-terminal 30 residues, 1-30 (MSKFLSQAALNTLRNTRLGSRQLVRSFAGI), are a transit peptide targeting the mitochondrion. The segment at 182–250 (IKELLDTRIR…IPEVESVEQV (69 aa)) is nifU. Positions 219 and 222 each coordinate [4Fe-4S] cluster.

It belongs to the NifU family.

It is found in the mitochondrion. Functionally, molecular scaffold for [Fe-S] cluster assembly of mitochondrial iron-sulfur proteins. The sequence is that of NFU1 iron-sulfur cluster scaffold homolog, mitochondrial from Drosophila erecta (Fruit fly).